Here is a 195-residue protein sequence, read N- to C-terminus: Pyridoxal 5'-phosphate synthase subunit PdxT (195 aa).

L-glutamine is bound at residue 46–48 (GES). C78 serves as the catalytic Nucleophile. L-glutamine is bound by residues R107 and 135-136 (IR). Catalysis depends on charge relay system residues H172 and E174.

It belongs to the glutaminase PdxT/SNO family. As to quaternary structure, in the presence of PdxS, forms a dodecamer of heterodimers. Only shows activity in the heterodimer.

It catalyses the reaction aldehydo-D-ribose 5-phosphate + D-glyceraldehyde 3-phosphate + L-glutamine = pyridoxal 5'-phosphate + L-glutamate + phosphate + 3 H2O + H(+). It carries out the reaction L-glutamine + H2O = L-glutamate + NH4(+). It functions in the pathway cofactor biosynthesis; pyridoxal 5'-phosphate biosynthesis. Its function is as follows. Catalyzes the hydrolysis of glutamine to glutamate and ammonia as part of the biosynthesis of pyridoxal 5'-phosphate. The resulting ammonia molecule is channeled to the active site of PdxS. The protein is Pyridoxal 5'-phosphate synthase subunit PdxT of Corynebacterium jeikeium (strain K411).